Here is a 131-residue protein sequence, read N- to C-terminus: Arsenate reductase 2 (131 aa).

Catalysis depends on nucleophile residues cysteine 10, cysteine 82, and cysteine 89. 2 cysteine pairs are disulfide-bonded: cysteine 10–cysteine 82 and cysteine 82–cysteine 89.

Belongs to the low molecular weight phosphotyrosine protein phosphatase family. Thioredoxin-coupled ArsC subfamily.

It localises to the cytoplasm. It catalyses the reaction arsenate + [thioredoxin]-dithiol + H(+) = arsenite + [thioredoxin]-disulfide + H2O. Catalyzes the reduction of arsenate [As(V)] to arsenite [As(III)]. The chain is Arsenate reductase 2 from Staphylococcus epidermidis (strain ATCC 35984 / DSM 28319 / BCRC 17069 / CCUG 31568 / BM 3577 / RP62A).